Here is a 771-residue protein sequence, read N- to C-terminus: Myotubularin-related protein 10 (771 aa).

The Myotubularin phosphatase domain maps to 217–657 (FETYSDWDRE…THIKLWKLCY (441 aa)). S603 and S745 each carry phosphoserine.

This sequence belongs to the protein-tyrosine phosphatase family. Non-receptor class myotubularin subfamily.

This is Myotubularin-related protein 10 (Mtmr10) from Mus musculus (Mouse).